We begin with the raw amino-acid sequence, 184 residues long: Ribosome-recycling factor (184 aa).

This sequence belongs to the RRF family.

Its subcellular location is the cytoplasm. Responsible for the release of ribosomes from messenger RNA at the termination of protein biosynthesis. May increase the efficiency of translation by recycling ribosomes from one round of translation to another. The sequence is that of Ribosome-recycling factor from Caldicellulosiruptor saccharolyticus (strain ATCC 43494 / DSM 8903 / Tp8T 6331).